The chain runs to 128 residues: Small ribosomal subunit protein uS11 (128 aa).

This sequence belongs to the universal ribosomal protein uS11 family. As to quaternary structure, part of the 30S ribosomal subunit. Interacts with proteins S7 and S18. Binds to IF-3.

Located on the platform of the 30S subunit, it bridges several disparate RNA helices of the 16S rRNA. Forms part of the Shine-Dalgarno cleft in the 70S ribosome. The sequence is that of Small ribosomal subunit protein uS11 from Solidesulfovibrio magneticus (strain ATCC 700980 / DSM 13731 / RS-1) (Desulfovibrio magneticus).